The chain runs to 93 residues: Allatostatin C (93 aa).

The signal sequence occupies residues 1–23 (MSSVRNIAALALVLLVLAEWSAA). The propeptide occupies 24–61 (MPTTDKDKERLLNTVDLIDDDGSIETALINYLFTKQIV). Cys83 and Cys90 are oxidised to a cystine.

It is found in the secreted. Inhibits juvenile hormone biosynthesis. This is Allatostatin C from Camponotus floridanus (Florida carpenter ant).